The following is a 298-amino-acid chain: Probable alpha-L-glutamate ligase 2 (298 aa).

One can recognise an ATP-grasp domain in the interval 104-287 (MQLLSRQGIG…VADAIICFME (184 aa)). ATP-binding positions include K141, 178-179 (EY), D187, and 211-213 (RSN). Residues D248, E260, and N262 each contribute to the Mg(2+) site. Residues D248, E260, and N262 each contribute to the Mn(2+) site.

The protein belongs to the RimK family. Mg(2+) serves as cofactor. It depends on Mn(2+) as a cofactor.

This Shewanella frigidimarina (strain NCIMB 400) protein is Probable alpha-L-glutamate ligase 2.